The chain runs to 699 residues: Polyribonucleotide nucleotidyltransferase (699 aa).

Residues D485 and D491 each contribute to the Mg(2+) site. Positions 552 to 611 (PRITTIKINPEKIRDVIGKGGAVIRALTEETGTTIELEDDGTVRIASSNGEATKEAIRRI) constitute a KH domain. The 69-residue stretch at 621 to 689 (GRIYNGKVIR…RQGRVRLSIK (69 aa)) folds into the S1 motif domain.

This sequence belongs to the polyribonucleotide nucleotidyltransferase family. As to quaternary structure, component of the RNA degradosome, which is a multiprotein complex involved in RNA processing and mRNA degradation. Mg(2+) is required as a cofactor.

The protein localises to the cytoplasm. It catalyses the reaction RNA(n+1) + phosphate = RNA(n) + a ribonucleoside 5'-diphosphate. Functionally, involved in mRNA degradation. Catalyzes the phosphorolysis of single-stranded polyribonucleotides processively in the 3'- to 5'-direction. This is Polyribonucleotide nucleotidyltransferase from Shewanella sp. (strain W3-18-1).